The following is a 701-amino-acid chain: DNA ligase (701 aa).

NAD(+)-binding positions include 58-62 (DYEYD), 107-108 (SL), and glutamate 138. The active-site N6-AMP-lysine intermediate is the lysine 140. NAD(+) is bound by residues arginine 161, glutamate 199, lysine 323, and lysine 347. Zn(2+)-binding residues include cysteine 441, cysteine 444, cysteine 459, and cysteine 464. Residues 621–701 (EKRGKLAGLN…EEFLKMIGQQ (81 aa)) form the BRCT domain.

It belongs to the NAD-dependent DNA ligase family. LigA subfamily. The cofactor is Mg(2+). Mn(2+) serves as cofactor.

The enzyme catalyses NAD(+) + (deoxyribonucleotide)n-3'-hydroxyl + 5'-phospho-(deoxyribonucleotide)m = (deoxyribonucleotide)n+m + AMP + beta-nicotinamide D-nucleotide.. Its function is as follows. DNA ligase that catalyzes the formation of phosphodiester linkages between 5'-phosphoryl and 3'-hydroxyl groups in double-stranded DNA using NAD as a coenzyme and as the energy source for the reaction. It is essential for DNA replication and repair of damaged DNA. The polypeptide is DNA ligase (Sulfurihydrogenibium azorense (strain DSM 15241 / OCM 825 / Az-Fu1)).